The sequence spans 153 residues: Ribosome maturation factor RimP (153 aa).

It belongs to the RimP family.

The protein resides in the cytoplasm. In terms of biological role, required for maturation of 30S ribosomal subunits. The polypeptide is Ribosome maturation factor RimP (Clostridium botulinum (strain Kyoto / Type A2)).